The sequence spans 134 residues: Flagellar basal-body rod protein FlgC (134 aa).

This sequence belongs to the flagella basal body rod proteins family. The basal body constitutes a major portion of the flagellar organelle and consists of four rings (L,P,S, and M) mounted on a central rod. The rod consists of about 26 subunits of FlgG in the distal portion, and FlgB, FlgC and FlgF are thought to build up the proximal portion of the rod with about 6 subunits each.

The protein resides in the bacterial flagellum basal body. This chain is Flagellar basal-body rod protein FlgC (flgC), found in Escherichia coli O157:H7.